We begin with the raw amino-acid sequence, 459 residues long: Glycosyl hydrolase family 109 protein (459 aa).

The tat-type signal signal peptide spans 1 to 45 (MAGDESRSNPFSRRTLLRTSAAAGAGLGVAGLSTGYGAAQPVRPA). Residues 70–71 (NR), D92, 141–144 (WEWH), 161–162 (EC), and N190 contribute to the NAD(+) site. Residues Y219, R238, 250–253 (YPTH), and Y332 contribute to the substrate site. Position 250 (Y250) interacts with NAD(+). The interval 440–459 (DFTRGRWQTPHPGVDSPKPA) is disordered.

It belongs to the Gfo/Idh/MocA family. Glycosyl hydrolase 109 subfamily. Requires NAD(+) as cofactor. Post-translationally, predicted to be exported by the Tat system. The position of the signal peptide cleavage has not been experimentally proven.

Glycosidase. This is Glycosyl hydrolase family 109 protein from Saccharopolyspora erythraea (strain ATCC 11635 / DSM 40517 / JCM 4748 / NBRC 13426 / NCIMB 8594 / NRRL 2338).